We begin with the raw amino-acid sequence, 165 residues long: Nascent polypeptide-associated complex subunit alpha (165 aa).

An NAC-A/B domain is found at 14–78 (NRNEKKAREL…AKVDNFTQRL (65 aa)). Residues 126–165 (LSNDDIDLVVQQTNATKGQAIKALKEHNGDIVNAIMSLSK) enclose the UBA domain.

It belongs to the NAC-alpha family. As to quaternary structure, part of the nascent polypeptide-associated complex (NAC), consisting of EGD2 and EGD1. NAC associates with ribosomes via EGD1.

Its subcellular location is the cytoplasm. It localises to the nucleus. Component of the nascent polypeptide-associated complex (NAC), a dynamic component of the ribosomal exit tunnel, protecting the emerging polypeptides from interaction with other cytoplasmic proteins to ensure appropriate nascent protein targeting. The NAC complex also promotes mitochondrial protein import by enhancing productive ribosome interactions with the outer mitochondrial membrane and blocks the inappropriate interaction of ribosomes translating non-secretory nascent polypeptides with translocation sites in the membrane of the endoplasmic reticulum. EGD2 may also be involved in transcription regulation. This is Nascent polypeptide-associated complex subunit alpha (EGD2) from Candida glabrata (strain ATCC 2001 / BCRC 20586 / JCM 3761 / NBRC 0622 / NRRL Y-65 / CBS 138) (Yeast).